Consider the following 708-residue polypeptide: Exocyst complex component 5 (708 aa).

A2 bears the N-acetylalanine mark. A coiled-coil region spans residues 40-101 (KRLLEEFVNH…AFQHFQELDE (62 aa)). Phosphothreonine occurs at positions 122, 395, and 405. S412 is subject to Phosphoserine.

This sequence belongs to the SEC10 family. The exocyst complex is composed of EXOC1, EXOC2, EXOC3, EXOC4, EXOC5, EXOC6, EXOC7 and EXOC8. Interacts with EXOC3L1.

The protein localises to the cytoplasm. It is found in the midbody. Its function is as follows. Component of the exocyst complex involved in the docking of exocytic vesicles with fusion sites on the plasma membrane. The polypeptide is Exocyst complex component 5 (Exoc5) (Mus musculus (Mouse)).